Consider the following 464-residue polypeptide: Chitobiosyldiphosphodolichol beta-mannosyltransferase (464 aa).

Residues 1 to 2 (MA) are Lumenal-facing. A helical membrane pass occupies residues 3 to 23 (ASCLVLLALCLLLPLLLLGGW). At 24 to 99 (KRWRRGRAAR…ELQSLAVGPR (76 aa)) the chain is on the cytoplasmic side. The segment at residues 100–120 (VFQYGVKVVLQAMYLLWKLMW) is an intramembrane region (helical). At 121–464 (REPGAYIFLQ…QTVLPLVMDT (344 aa)) the chain is on the cytoplasmic side. At Ser-242 the chain carries Phosphoserine. The interval 243-262 (PFRARSEPEDPVTERSAFTE) is disordered.

Belongs to the glycosyltransferase group 1 family. Glycosyltransferase 33 subfamily.

Its subcellular location is the endoplasmic reticulum membrane. It catalyses the reaction an N,N'-diacetylchitobiosyl-diphospho-di-trans,poly-cis-dolichol + GDP-alpha-D-mannose = a beta-D-Man-(1-&gt;4)-beta-D-GlcNAc-(1-&gt;4)-alpha-D-GlcNAc-diphospho-di-trans,poly-cis-dolichol + GDP + H(+). Its pathway is protein modification; protein glycosylation. In terms of biological role, mannosyltransferase that operates in the biosynthetic pathway of dolichol-linked oligosaccharides, the glycan precursors employed in protein asparagine (N)-glycosylation. The assembly of dolichol-linked oligosaccharides begins on the cytosolic side of the endoplasmic reticulum membrane and finishes in its lumen. The sequential addition of sugars to dolichol pyrophosphate produces dolichol-linked oligosaccharides containing fourteen sugars, including two GlcNAcs, nine mannoses and three glucoses. Once assembled, the oligosaccharide is transferred from the lipid to nascent proteins by oligosaccharyltransferases. Catalyzes, on the cytoplasmic face of the endoplasmic reticulum, the addition of the first mannose residues to the dolichol-linked oligosaccharide chain, to produce Man1GlcNAc(2)-PP-dolichol core oligosaccharide. Man1GlcNAc(2)-PP-dolichol is a substrate for ALG2, the following enzyme in the biosynthetic pathway. The sequence is that of Chitobiosyldiphosphodolichol beta-mannosyltransferase from Homo sapiens (Human).